The following is a 336-amino-acid chain: Phosphoribosylformylglycinamidine cyclo-ligase (336 aa).

Belongs to the AIR synthase family.

It localises to the cytoplasm. It carries out the reaction 2-formamido-N(1)-(5-O-phospho-beta-D-ribosyl)acetamidine + ATP = 5-amino-1-(5-phospho-beta-D-ribosyl)imidazole + ADP + phosphate + H(+). It functions in the pathway purine metabolism; IMP biosynthesis via de novo pathway; 5-amino-1-(5-phospho-D-ribosyl)imidazole from N(2)-formyl-N(1)-(5-phospho-D-ribosyl)glycinamide: step 2/2. The protein is Phosphoribosylformylglycinamidine cyclo-ligase of Caldanaerobacter subterraneus subsp. tengcongensis (strain DSM 15242 / JCM 11007 / NBRC 100824 / MB4) (Thermoanaerobacter tengcongensis).